An 810-amino-acid chain; its full sequence is Interleukin-4 receptor subunit alpha (810 aa).

An N-terminal signal peptide occupies residues 1–25; that stretch reads MGRLCTKFLTSVGCLILLLVTGSGS. The Extracellular portion of the chain corresponds to 26 to 233; that stretch reads IKVLGEPTCF…NHFQLPLIQR (208 aa). Cysteine 34 and cysteine 44 are joined by a disulfide. Asparagine 72 is a glycosylation site (N-linked (GlcNAc...) asparagine). The cysteines at positions 75 and 87 are disulfide-linked. A Fibronectin type-III domain is found at 126-224; it reads APDNLTLHTN…EWSPSITWYN (99 aa). Residues asparagine 129, asparagine 135, and asparagine 163 are each glycosylated (N-linked (GlcNAc...) asparagine). Residue serine 165 is modified to Phosphoserine. A WSXWS motif motif is present at residues 213 to 217; sequence WSEWS. The helical transmembrane segment at 234 to 257 threads the bilayer; that stretch reads LPLGVTISCLCIPLFCLFCYFSIT. Residues 258-810 lie on the Cytoplasmic side of the membrane; the sequence is KIKKIWWDQI…PVGALGIAVS (553 aa). Positions 263 to 271 match the Box 1 motif motif; it reads WWDQIPTPA. The interval 441–557 is required for IRS1 activation and IL4-induced cell growth; it reads GSGQASVSWA…ESWEQILHMS (117 aa). Positions 460-482 are disordered; it reads ATCQVTEQPSHPGPLSGSPAQSA. Residue tyrosine 500 is modified to Phosphotyrosine. The disordered stretch occupies residues 510 to 546; that stretch reads APNPGELAPEQQQADHLEEEEPPSPADPHSSGPPMQP. Residues 557-653 are required for IL4-induced gene expression; that stretch reads SVLQHGAAAG…SSVPLFTFGL (97 aa). Tyrosine 575, tyrosine 603, and tyrosine 631 each carry phosphotyrosine. Residues 586–672 are disordered; that stretch reads AAQDPGVPGV…NSDPPKSPPE (87 aa). Positions 635–647 are enriched in low complexity; sequence QNPVPNQSPSSVP. An ITIM motif motif is present at residues 707-712; the sequence is IVYSSL. Positions 766 to 810 are disordered; that stretch reads PPEANLMSAPKTPSNLSGEGKGPGHSPVPSQTTEVPVGALGIAVS.

This sequence belongs to the type I cytokine receptor family. Type 4 subfamily. As to quaternary structure, the functional IL4 receptor is formed by initial binding of IL4 to IL4R. Subsequent recruitment to the complex of the common gamma chain, in immune cells, creates a type I receptor and, in non-immune cells, of IL13RA1 forms a type II receptor. IL4R can also interact with the IL13/IL13RA1 complex to form a similar type II receptor. Interacts with the SH2-containing phosphatases, PTPN6/SHIP1, PTPN11/SHIP2 and INPP5D/SHIP. Interacts with JAK3. Interacts with PIK3C3. Interacts with JAK1 through a Box 1-containing region; inhibited by SOCS5. Interacts with SOCS5; inhibits IL4 signaling. Interacts with CLM1. Interacts with IL13RA2. Post-translationally, on IL4 binding, phosphorylated on C-terminal tyrosine residues. Soluble IL4R can also be produced by proteolytic cleavage at the cell surface (shedding). As to expression, expressed in both Th1 and Th2 cells.

The protein resides in the cell membrane. It localises to the secreted. In terms of biological role, receptor for both interleukin 4 and interleukin 13. Couples to the JAK1/2/3-STAT6 pathway. The IL4 response is involved in promoting Th2 differentiation. The IL4/IL13 responses are involved in regulating IgE production and, chemokine and mucus production at sites of allergic inflammation. In certain cell types, can signal through activation of insulin receptor substrates, IRS1/IRS2. The polypeptide is Interleukin-4 receptor subunit alpha (Il4r) (Mus musculus (Mouse)).